The chain runs to 628 residues: tRNA uridine 5-carboxymethylaminomethyl modification enzyme MnmG (628 aa).

Residues 14 to 19 (GAGHAG), Val-126, and Ser-181 each bind FAD. 273-287 (GPRYCPSIEDKVVRF) contacts NAD(+). Gln-370 is a binding site for FAD.

This sequence belongs to the MnmG family. Homodimer. Heterotetramer of two MnmE and two MnmG subunits. The cofactor is FAD.

It localises to the cytoplasm. In terms of biological role, NAD-binding protein involved in the addition of a carboxymethylaminomethyl (cmnm) group at the wobble position (U34) of certain tRNAs, forming tRNA-cmnm(5)s(2)U34. This Bacillus subtilis (strain 168) protein is tRNA uridine 5-carboxymethylaminomethyl modification enzyme MnmG.